A 399-amino-acid chain; its full sequence is Imidazolonepropionase (399 aa).

Fe(3+) contacts are provided by histidine 68 and histidine 70. Histidine 68 and histidine 70 together coordinate Zn(2+). Arginine 77, tyrosine 140, and histidine 173 together coordinate 4-imidazolone-5-propanoate. Tyrosine 140 contacts N-formimidoyl-L-glutamate. Histidine 238 lines the Fe(3+) pocket. Histidine 238 serves as a coordination point for Zn(2+). Glutamine 241 is a 4-imidazolone-5-propanoate binding site. Aspartate 313 serves as a coordination point for Fe(3+). Aspartate 313 provides a ligand contact to Zn(2+). Residues asparagine 315 and glycine 317 each coordinate N-formimidoyl-L-glutamate. 4-imidazolone-5-propanoate is bound at residue threonine 318.

It belongs to the metallo-dependent hydrolases superfamily. HutI family. The cofactor is Zn(2+). Fe(3+) is required as a cofactor.

It is found in the cytoplasm. It carries out the reaction 4-imidazolone-5-propanoate + H2O = N-formimidoyl-L-glutamate. It participates in amino-acid degradation; L-histidine degradation into L-glutamate; N-formimidoyl-L-glutamate from L-histidine: step 3/3. In terms of biological role, catalyzes the hydrolytic cleavage of the carbon-nitrogen bond in imidazolone-5-propanoate to yield N-formimidoyl-L-glutamate. It is the third step in the universal histidine degradation pathway. The sequence is that of Imidazolonepropionase from Rhizorhabdus wittichii (strain DSM 6014 / CCUG 31198 / JCM 15750 / NBRC 105917 / EY 4224 / RW1) (Sphingomonas wittichii).